Here is a 400-residue protein sequence, read N- to C-terminus: Poly(A) polymerase type 3 (400 aa).

ATP contacts are provided by residues 97-99 (FGS), T106, 110-112 (DID), D164, K225, Y234, and 243-244 (GV). Residues D110, D112, and D164 each coordinate Mg(2+). Residues 382–390 (GEIINKNKK) carry the Nuclear localization signal motif.

This sequence belongs to the poly(A) polymerase family. Monomer. The cofactor is Mg(2+). It depends on Mn(2+) as a cofactor.

Its subcellular location is the nucleus. The catalysed reaction is RNA(n) + ATP = RNA(n)-3'-adenine ribonucleotide + diphosphate. Polymerase that creates the 3'-poly(A) tail of mRNA's. May acquire specificity through interaction with a cleavage and polyadenylation factor (CPSF). This is Poly(A) polymerase type 3 from Xenopus laevis (African clawed frog).